The chain runs to 337 residues: CMRF35-like molecule 1 (337 aa).

Positions 1–19 are cleaved as a signal peptide; sequence MHLSLLVPFLFWITGCCTA. In terms of domain architecture, Ig-like V-type spans 20-125; sequence EDPVTGPEEV…LDPMFKVTVN (106 aa). Over 20–193 the chain is Extracellular; sequence EDPVTGPEEV…GVGDGFLDLS (174 aa). A plays an important role in murine norovirus (MNV) binding region spans residues 39 to 45; it reads VQCRYTS. Intrachain disulfides connect C41-C109 and C55-C63. A helical transmembrane segment spans residues 194-214; that stretch reads VLLPVISAVLLLLLLVASLFA. The Cytoplasmic segment spans residues 215–337; the sequence is WRMVRRQKKA…IRRPLPAAMP (123 aa). Disordered stretches follow at residues 248–270 and 318–337; these read QPRT…GKDH and LEEE…AAMP. Residues 252-266 are compositionally biased toward low complexity; the sequence is SPGSSWKKGSSMSSS.

The protein belongs to the CD300 family. In terms of assembly, interacts with PTPN6/SHP-1 in a tyrosine phosphorylation dependent manner. Interacts with IL4R. Phosphorylated on tyrosine. As to expression, expressed in myeloid cells. Present on the surface of macrophages (at protein level). Highly expressed by alveolar, splenic macrophages and bone marrow-derived dendritic cells. Expression is increased following aeroallergen challenge in macrophages, mast cells, and eosinophils.

It localises to the cell membrane. Acts as an inhibitory receptor for myeloid cells and mast cells. Positively regulates the phagocytosis of apoptotic cells (efferocytosis) via phosphatidylserine (PS) recognition; recognizes and binds PS as a ligand which is expressed on the surface of apoptotic cells. Plays an important role in the maintenance of immune homeostasis, by promoting macrophage-mediated efferocytosis and by inhibiting dendritic cell-mediated efferocytosis. Negatively regulates Fc epsilon receptor-dependent mast cell activation and allergic responses via binding to ceramide which acts as a ligand. May act as a coreceptor for interleukin 4 (IL-4). Associates with and regulates IL-4 receptor alpha-mediated responses by augmenting IL-4- and IL-13-induced signaling. Negatively regulates the Toll-like receptor (TLR) signaling mediated by MYD88 and TRIF through activation of PTPN6/SHP-1 and PTPN11/SHP-2. Inhibits osteoclast formation. Induces macrophage cell death upon engagement. In terms of biological role, (Microbial infection) Acts as a functional receptor for murine norovirus (MNV). Mediates binding to the cell surface and is both necessary and sufficient for viral entry and replication. This interaction requires Mg(2+) and Ca(2+) and is enhanced by bile acids. Primary determinant of MNV species tropism and is sufficient to render cells permissive to infection by MNV. Can render nonmurine mammalian cells susceptible to MNV infection. The protein is CMRF35-like molecule 1 (Cd300lf) of Mus musculus (Mouse).